The following is a 945-amino-acid chain: Leucine--tRNA ligase (945 aa).

The 'HIGH' region motif lies at 43-53 (PYPNGAIHIGH). Residues 638 to 642 (KMSKS) carry the 'KMSKS' region motif. K641 is a binding site for ATP.

It belongs to the class-I aminoacyl-tRNA synthetase family.

It is found in the cytoplasm. The enzyme catalyses tRNA(Leu) + L-leucine + ATP = L-leucyl-tRNA(Leu) + AMP + diphosphate. This Pyrobaculum neutrophilum (strain DSM 2338 / JCM 9278 / NBRC 100436 / V24Sta) (Thermoproteus neutrophilus) protein is Leucine--tRNA ligase.